The following is a 366-amino-acid chain: Anhydro-N-acetylmuramic acid kinase (366 aa).

10-17 contributes to the ATP binding site; that stretch reads GTSMDGID.

This sequence belongs to the anhydro-N-acetylmuramic acid kinase family.

The enzyme catalyses 1,6-anhydro-N-acetyl-beta-muramate + ATP + H2O = N-acetyl-D-muramate 6-phosphate + ADP + H(+). It functions in the pathway amino-sugar metabolism; 1,6-anhydro-N-acetylmuramate degradation. The protein operates within cell wall biogenesis; peptidoglycan recycling. Functionally, catalyzes the specific phosphorylation of 1,6-anhydro-N-acetylmuramic acid (anhMurNAc) with the simultaneous cleavage of the 1,6-anhydro ring, generating MurNAc-6-P. Is required for the utilization of anhMurNAc either imported from the medium or derived from its own cell wall murein, and thus plays a role in cell wall recycling. This chain is Anhydro-N-acetylmuramic acid kinase, found in Legionella pneumophila subsp. pneumophila (strain Philadelphia 1 / ATCC 33152 / DSM 7513).